The sequence spans 735 residues: Translation factor GUF1 homolog, chloroplastic (735 aa).

Disordered stretches follow at residues Met-1–Ser-38 and Pro-106–Asn-126. The N-terminal 47 residues, Met-1 to Arg-47, are a transit peptide targeting the chloroplast. The span at Cys-11–Ser-38 shows a compositional bias: polar residues. The span at Pro-106–Lys-115 shows a compositional bias: basic and acidic residues. Positions Ser-137 to Lys-319 constitute a tr-type G domain. GTP-binding positions include Ala-146 to Ser-153, Asp-212 to His-216, and Asn-266 to Asp-269.

It belongs to the TRAFAC class translation factor GTPase superfamily. Classic translation factor GTPase family. LepA subfamily.

The protein localises to the plastid. It localises to the chloroplast. It carries out the reaction GTP + H2O = GDP + phosphate + H(+). Promotes chloroplast protein synthesis. May act as a fidelity factor of the translation reaction, by catalyzing a one-codon backward translocation of tRNAs on improperly translocated ribosomes. This Physcomitrium patens (Spreading-leaved earth moss) protein is Translation factor GUF1 homolog, chloroplastic.